The sequence spans 181 residues: Small ribosomal subunit protein uS4 (181 aa).

One can recognise an S4 RNA-binding domain in the interval 108–180 (RRLQTIVYRK…GERQRIMNQR (73 aa)).

Belongs to the universal ribosomal protein uS4 family. As to quaternary structure, part of the 30S ribosomal subunit. Contacts protein S5. The interaction surface between S4 and S5 is involved in control of translational fidelity.

In terms of biological role, one of the primary rRNA binding proteins, it binds directly to 16S rRNA where it nucleates assembly of the body of the 30S subunit. Functionally, with S5 and S12 plays an important role in translational accuracy. This chain is Small ribosomal subunit protein uS4, found in Methanocorpusculum labreanum (strain ATCC 43576 / DSM 4855 / Z).